A 515-amino-acid chain; its full sequence is ATP synthase subunit alpha (515 aa).

169 to 176 (GDRQTGKT) serves as a coordination point for ATP.

Belongs to the ATPase alpha/beta chains family. F-type ATPases have 2 components, CF(1) - the catalytic core - and CF(0) - the membrane proton channel. CF(1) has five subunits: alpha(3), beta(3), gamma(1), delta(1), epsilon(1). CF(0) has three main subunits: a(1), b(2) and c(9-12). The alpha and beta chains form an alternating ring which encloses part of the gamma chain. CF(1) is attached to CF(0) by a central stalk formed by the gamma and epsilon chains, while a peripheral stalk is formed by the delta and b chains.

It localises to the cell inner membrane. The enzyme catalyses ATP + H2O + 4 H(+)(in) = ADP + phosphate + 5 H(+)(out). Functionally, produces ATP from ADP in the presence of a proton gradient across the membrane. The alpha chain is a regulatory subunit. The chain is ATP synthase subunit alpha from Myxococcus xanthus.